Here is a 24-residue protein sequence, read N- to C-terminus: Iron-regulated 31 kDa protein (24 aa).

Its subcellular location is the periplasm. In terms of biological role, may be involved in iron uptake. This chain is Iron-regulated 31 kDa protein, found in Haemophilus influenzae.